Consider the following 246-residue polypeptide: Probable transcriptional regulatory protein Teth39_1009 (246 aa).

A disordered region spans residues 1-21 (MSGHSKWANIKHKKEKMDAKK).

Belongs to the TACO1 family.

The protein resides in the cytoplasm. This Thermoanaerobacter pseudethanolicus (strain ATCC 33223 / 39E) (Clostridium thermohydrosulfuricum) protein is Probable transcriptional regulatory protein Teth39_1009.